We begin with the raw amino-acid sequence, 244 residues long: Tubulin-folding cofactor B (244 aa).

M1 is modified (N-acetylmethionine). Y98 is modified (phosphotyrosine). The residue at position 110 (S110) is a Phosphoserine. The CAP-Gly domain maps to 183-225 (GLTDFKPGYWIGIRYDEPLGKNDGSVNGKRYFECQAKYGAFVK). N6-acetyllysine is present on K219.

It belongs to the TBCB family. As to quaternary structure, supercomplex made of cofactors A to E. Cofactors A and D function by capturing and stabilizing tubulin in a quasi-native conformation. Cofactor E binds to the cofactor D-tubulin complex; interaction with cofactor C then causes the release of tubulin polypeptides that are committed to the native state. Cofactors B and E can form a heterodimer which binds to alpha-tubulin and enhances their ability to dissociate tubulin heterodimers. Interacts with GAN. Interacts with DCTN1. In terms of processing, ubiquitinated in the presence of GAN which targets it for degradation by the proteasome. Post-translationally, phosphorylation by PAK1 is required for normal function.

Its subcellular location is the cytoplasm. It is found in the cytoskeleton. Binds to alpha-tubulin folding intermediates after their interaction with cytosolic chaperonin in the pathway leading from newly synthesized tubulin to properly folded heterodimer. Involved in regulation of tubulin heterodimer dissociation. May function as a negative regulator of axonal growth. The polypeptide is Tubulin-folding cofactor B (TBCB) (Bos taurus (Bovine)).